The following is a 432-amino-acid chain: Lysosomal acid phosphatase (432 aa).

A signal peptide spans 1-32 (MADGSCLGSGPQLGLIALLVVLLFSAVPLAQS). Over 33–384 (RELRFVTLVY…TTSFIMTEET (352 aa)) the chain is Lumenal. The active-site Nucleophile is His-44. N-linked (GlcNAc...) asparagine glycans are attached at residues Asn-94, Asn-135, Asn-179, Asn-193, and Asn-269. Cystine bridges form between Cys-161/Cys-373, Cys-214/Cys-313, and Cys-348/Cys-352. Asp-290 functions as the Proton donor in the catalytic mechanism. Residues Asn-325 and Asn-334 are each glycosylated (N-linked (GlcNAc...) asparagine). The chain crosses the membrane as a helical span at residues 385-405 (IIGLTIGAIALFIIIVVLMLL). At 406–432 (SCNEPKDDGYQHVSDEGDDHETKGLAM) the chain is on the cytoplasmic side.

It belongs to the histidine acid phosphatase family. Post-translationally, the membrane-bound form is converted to the soluble form by sequential proteolytic processing. First, the C-terminal cytoplasmic tail is removed. Cleavage by a lysosomal protease releases the soluble form in the lysosome lumen.

The protein resides in the lysosome membrane. The protein localises to the lysosome lumen. The enzyme catalyses a phosphate monoester + H2O = an alcohol + phosphate. The chain is Lysosomal acid phosphatase (acp2) from Xenopus laevis (African clawed frog).